We begin with the raw amino-acid sequence, 601 residues long: Glutathione-regulated potassium-efflux system protein KefB (601 aa).

The next 13 membrane-spanning stretches (helical) occupy residues 4–24 (SDFLLAGVLFLFAAVAAVPLA), 29–49 (IGAVLGYLLAGIAIGPWGLGF), 55–75 (EILHFSELGVVFLMFIIGLEL), 87–107 (IFGVGAAQVLLSSALLAGLLM), 115–135 (AAVVGGIGLAMSSTAMALQLM), 152–172 (VLLFQDLAVIPALALVPLLAG), 177–197 (HFDWMKIGMKVLAFVGMLIGG), 207–227 (FIAASGVREVFTAATLLLVLG), 230–250 (LFMDALGLSMALGTFIAGVLL), 268–288 (GLLLGLFFISVGMSLNLGVLY), 291–311 (LLWVVISVVVLVAVKILVLYL), 324–344 (MQFAGVLSQGGEFAFVLFSTA), and 356–376 (ALLLVTVTLSMMTTPLLMKLV). One can recognise an RCK N-terminal domain in the interval 400 to 519 (KPQVIVVGFG…AGVTQFSRET (120 aa)).

Belongs to the monovalent cation:proton antiporter 2 (CPA2) transporter (TC 2.A.37) family. KefB subfamily. As to quaternary structure, interacts with the regulatory subunit KefG.

It localises to the cell inner membrane. Its function is as follows. Pore-forming subunit of a potassium efflux system that confers protection against electrophiles. Catalyzes K(+)/H(+) antiport. The sequence is that of Glutathione-regulated potassium-efflux system protein KefB from Escherichia coli O81 (strain ED1a).